The following is a 374-amino-acid chain: Methylthioribose-1-phosphate isomerase (374 aa).

Asp256 serves as the catalytic Proton donor.

It belongs to the eIF-2B alpha/beta/delta subunits family. MtnA subfamily.

It localises to the cytoplasm. The protein resides in the nucleus. The catalysed reaction is 5-(methylsulfanyl)-alpha-D-ribose 1-phosphate = 5-(methylsulfanyl)-D-ribulose 1-phosphate. The protein operates within amino-acid biosynthesis; L-methionine biosynthesis via salvage pathway; L-methionine from S-methyl-5-thio-alpha-D-ribose 1-phosphate: step 1/6. Its function is as follows. Catalyzes the interconversion of methylthioribose-1-phosphate (MTR-1-P) into methylthioribulose-1-phosphate (MTRu-1-P). In Leishmania braziliensis, this protein is Methylthioribose-1-phosphate isomerase.